We begin with the raw amino-acid sequence, 236 residues long: Probable sulfate/thiosulfate import ATP-binding protein CysA (236 aa).

The region spanning 3 to 233 (ILIENISKRF…PTNTFVTNFL (231 aa)) is the ABC transporter domain. Residue 35–42 (GPSGSGKS) coordinates ATP.

Belongs to the ABC transporter superfamily. Sulfate/tungstate importer (TC 3.A.1.6) family.

The protein localises to the plastid. The protein resides in the chloroplast. It carries out the reaction sulfate(out) + ATP + H2O = sulfate(in) + ADP + phosphate + H(+). The enzyme catalyses thiosulfate(out) + ATP + H2O = thiosulfate(in) + ADP + phosphate + H(+). In terms of biological role, part of the ABC transporter complex involved in sulfate/thiosulfate import. Responsible for energy coupling to the transport system. The chain is Probable sulfate/thiosulfate import ATP-binding protein CysA from Chlorella vulgaris (Green alga).